The primary structure comprises 970 residues: Polycystin-2 (970 aa).

Positions 1 to 11 (MVNSSRVQPQQ) are enriched in polar residues. A disordered region spans residues 1 to 182 (MVNSSRVQPQ…GDPLHRHLPL (182 aa)). Topologically, residues 1 to 221 (MVNSSRVQPQ…STDREKYLKS (221 aa)) are cytoplasmic. Residues 25–45 (GPGRLMAGGAIAGAGLAAPGG) show a composition bias toward low complexity. Residues 47-60 (REQRGLEIEMERIR) show a composition bias toward basic and acidic residues. The segment covering 62 to 83 (AAARDPPAGASASPSPPLSSCS) has biased composition (low complexity). 2 positions are modified to phosphoserine: S76 and S80. The segment covering 95–109 (EAEEEEEEEEVEGEE) has biased composition (acidic residues). Residues 125–138 (RRSASSSAVSSAGA) show a composition bias toward low complexity. The residue at position 139 (R139) is an Omega-N-methylarginine. A compositionally biased stretch (gly residues) spans 139–148 (RGRGLGGYHG). The helical transmembrane segment at 222 to 243 (VLRELATYLLFLIVLCILTYGM) threads the bilayer. The Extracellular portion of the chain corresponds to 244-470 (MSSSVYYYTR…PVKLIRYVTT (227 aa)). Residues N301, N307, and N330 are each glycosylated (N-linked (GlcNAc...) asparagine). C333 and C346 are oxidised to a cystine. N364 and N377 each carry an N-linked (GlcNAc...) asparagine glycan. A helical transmembrane segment spans residues 471–491 (FDFFLAACEIIFCLFILYYVV). The Cytoplasmic segment spans residues 492–507 (EEILEIRIHKLHYFRS). The helical transmembrane segment at 508–528 (FWNCLDVVIIVLSVVAIGINI) threads the bilayer. Topologically, residues 529-554 (YRTSNVEALLQFLEDQNTFPNFENLA) are extracellular. Residues 555–575 (YWQTQFNNIAAVIVFFVWIKL) traverse the membrane as a helical segment. Q559 serves as a coordination point for cholesterol. At 576-599 (FKFINFNRTMSQLSTTMSRCAKDL) the chain is on the cytoplasmic side. The helical transmembrane segment at 600–621 (FGFAIMFFIIFLAYAQLAYLVF) threads the bilayer. Residues 622–633 (GTQVDDFSTFQE) lie on the Extracellular side of the membrane. The segment at residues 634–648 (CIFTQFRIILGDINF) is an intramembrane region (pore-forming). A Ca(2+)-binding site is contributed by L643. Residues 643-645 (LGD) carry the Selectivity filter motif. The Extracellular portion of the chain corresponds to 649-656 (AEIEEANR). The chain crosses the membrane as a helical span at residues 657–677 (VLGPIYFTTFVFFMFFILLNM). Residues 678–970 (FLAIINDTYS…GGNGSANIHV (293 aa)) are Cytoplasmic-facing. In terms of domain architecture, EF-hand spans 750-785 (KGHTDAEIEAIFTKYDQDGDQELTEHEHQQMRDDLE). Residues D765, D767, D769, E771, and E776 each coordinate Ca(2+). The tract at residues 766–833 (QDGDQELTEH…HSSRRRGSIS (68 aa)) is disordered. The span at 772–797 (LTEHEHQQMRDDLEKEREDLDLDHSS) shows a compositional bias: basic and acidic residues. Low complexity predominate over residues 798–809 (LPRPMSSRSFPR). Phosphoserine is present on residues S803, S810, S814, and S831. Residues 805 to 824 (RSFPRSLDDSEEEDDDDSGH) form a linker region. The important for interaction with PACS1 and PACS2 stretch occupies residues 812–823 (DDSEEEDDDDSG). A coiled-coil region spans residues 835–874 (GVSYEEFQVLVRRVDRMEHSIGSIVSKIDAVIVKLEIMER). The tract at residues 921–970 (DDAASQISHGLGTPLGLNGQPRPRSSRPSSSQSTEGMEGGGGNGSANIHV) is disordered. Low complexity predominate over residues 940 to 956 (QPRPRSSRPSSSQSTEG).

It belongs to the polycystin family. In terms of assembly, homotetramer. Component of the heterotetrameric polycystin channel complex with PKD1; the tetramer contains one PKD1 chain and three PKD2 chains. Isoform 1 interacts with PKD1 while isoform 3 does not. Interacts with PKD1L1; probably forms a Ca(2+) channel. Interacts with CD2AP. Interacts with HAX1. Interacts with NEK8. Part of a complex containing AKAP5, ADCY5, ADCY6 and PDE4C. Interacts (via C-terminus) with TRPV4 (via C-terminus). Interacts (via C-terminal acidic region) with PACS1 and PACS2; these interactions retain the protein in the endoplasmic reticulum and prevent trafficking to the cell membrane. Interacts with TMEM33. Form a heterotetramer with TRPC1 with a 2:2 stoichiometry; has distinct channel properties separate from PKD2 or TRPC1 homomers alone. Interacts with TMEM120A; TMEM120A inhibits PKD2 channel activity through the physical association of PKD2 with TMEM120A. Interacts (via N-terminus) with RYR2; regulates RYR2 channel activity. N-glycosylated. The four subunits in a tetramer probably differ in the extent of glycosylation; simultaneous glycosylation of all experimentally validated sites would probably create steric hindrance. In terms of processing, phosphorylated. Phosphorylation is important for protein function; a mutant that lacks the N-terminal phosphorylation sites cannot complement a zebrafish pkd2-deficient mutant. PKD-mediated phosphorylation at the C-terminus regulates its function in the release of Ca(2+) stores from the endoplasmic reticulum. Phosphorylation at Ser-814 regulates PKD2 trafficking. Phosphorylation at Ser-76 is required for PKD2 trafficking to or retention at the lateral plasma membrane. Phosphorylation at Ser-803, Ser-814 and Ser-831 regulates PKD2 channel activity. Post-translationally, sumoylated by SUMO1; sumoylation regulates PKD2 membrane recycling and is necessary for intravascular pressure-induced arterial contractility. Expressed in mesenchymally derived structures in the developing embryo at day 12.5. In adult, mostly expressed in kidney.

It localises to the cell projection. The protein localises to the cilium membrane. The protein resides in the endoplasmic reticulum membrane. Its subcellular location is the cell membrane. It is found in the basolateral cell membrane. It localises to the cytoplasmic vesicle membrane. The protein localises to the golgi apparatus. The protein resides in the vesicle. Its subcellular location is the secreted. It is found in the extracellular exosome. The enzyme catalyses K(+)(in) = K(+)(out). It catalyses the reaction Na(+)(in) = Na(+)(out). It carries out the reaction Ca(2+)(in) = Ca(2+)(out). Channel activity is regulated by phosphorylation. Channel activity is regulated by intracellular Ca(2+). At the endoplasmic reticulum membrane (ER), TMEM33 enhances its channel activity. TMEM120A inhibits the channel activity of PKD2, and mediates mechanosensitivity of the PKD2-TMEM120A channel complex. PKD1/PKD2 complex on the plasma membrane is activated by PKD1 N-terminus. Functionally, forms a nonselective cation channel. Can function as a homotetrameric ion channel or can form heteromer with PKD1. Displays distinct function depending on its subcellular localization and regulation by its binding partners. Functions as a cation channel, with a preference for monovalent cations over divalent cations that allows K(+), Na(+) and Ca(2+) influx, with low selectivity for Ca(2+). Involved in fluid-flow mechanosensation in the primary cilium in renal epithelium. In the endoplasmic reticulum, likely functions as a K(+) channel to facilitate Ca(2+) release. The heterotetrameric PKD1/PKD2 channel has higher Ca(2+) permeability than homomeric PKD2 channel and acts as a primarily Ca(2+)-permeable channel. Interacts with and acts as a regulator of a number of other channels, such as TRPV4, TRPC1, IP3R, RYR2, ultimately further affecting intracellular signaling, to modulate intracellular Ca(2+) signaling. Together with TRPV4, forms mechano- and thermosensitive channels in cilium. In cardiomyocytes, PKD2 modulates Ca(2+) release from stimulated RYR2 receptors through direct association. Also involved in left-right axis specification via its role in sensing nodal flow; forms a complex with PKD1L1 in cilia to facilitate flow detection in left-right patterning. Acts as a regulator of cilium length together with PKD1. Mediates systemic blood pressure and contributes to the myogenic response in cerebral arteries though vasoconstriction. The protein is Polycystin-2 of Bos taurus (Bovine).